Reading from the N-terminus, the 403-residue chain is MAKLIVSDVDVKDKKVLVRVDFNVPIKDGVIGDDNRIVAALPTIKYIIENGGKAILLSHLGRIKSDEDKKSLSLAPVAKRLGELLEKPVTFVPSNEGKEVEDAINNMKDGDVVVLENTRFQDIDNDFGKRESKNDPKLGEYWASLGDVFVNDAFGTAHRSHASNVGIATAMKAAGKPAAAGFLLEKEIKFLGNAVANPVHPFVTILGGAKVSDKIGVITNLIPKADHIIIGGGMAYTFLKAQGHNIGKSLVEDDKVEFAKELLEKAGDKLVLPIDNVAATEFNNDAASEVVGQDIPDNEMGLDIGPKTIELFKKTLEGAKTVVWNGPMGVFEMPNFAKGTLEVGRALADLPDATTIVGGGDSTAAAKQLGIAPKLTHISTGGGASLEYLEGKELPGIACVSDK.

Residues 21-23, Arg36, 59-62, Arg119, and Arg159 contribute to the substrate site; these read DFN and HLGR. ATP contacts are provided by residues Lys214, Gly301, Glu332, and 359–362; that span reads GGDS.

This sequence belongs to the phosphoglycerate kinase family. As to quaternary structure, monomer.

It localises to the cytoplasm. It carries out the reaction (2R)-3-phosphoglycerate + ATP = (2R)-3-phospho-glyceroyl phosphate + ADP. It functions in the pathway carbohydrate degradation; glycolysis; pyruvate from D-glyceraldehyde 3-phosphate: step 2/5. This Lactobacillus delbrueckii subsp. bulgaricus (strain ATCC 11842 / DSM 20081 / BCRC 10696 / JCM 1002 / NBRC 13953 / NCIMB 11778 / NCTC 12712 / WDCM 00102 / Lb 14) protein is Phosphoglycerate kinase.